The chain runs to 509 residues: 2-isopropylmalate synthase (509 aa).

The region spanning 5 to 267 (IQIFDTTLRD…QTALNLEETK (263 aa)) is the Pyruvate carboxyltransferase domain. The Mn(2+) site is built by Asp-14, His-202, His-204, and Asn-238. The segment at 391–509 (KLETLQLQYV…AAENVEKVGN (119 aa)) is regulatory domain.

The protein belongs to the alpha-IPM synthase/homocitrate synthase family. LeuA type 1 subfamily. In terms of assembly, homodimer. Mn(2+) is required as a cofactor.

The protein resides in the cytoplasm. The catalysed reaction is 3-methyl-2-oxobutanoate + acetyl-CoA + H2O = (2S)-2-isopropylmalate + CoA + H(+). Its pathway is amino-acid biosynthesis; L-leucine biosynthesis; L-leucine from 3-methyl-2-oxobutanoate: step 1/4. Functionally, catalyzes the condensation of the acetyl group of acetyl-CoA with 3-methyl-2-oxobutanoate (2-ketoisovalerate) to form 3-carboxy-3-hydroxy-4-methylpentanoate (2-isopropylmalate). This is 2-isopropylmalate synthase from Staphylococcus aureus (strain Mu3 / ATCC 700698).